We begin with the raw amino-acid sequence, 312 residues long: Putative endo-1,4-beta-xylanase (312 aa).

Residues 1-301 (MKQQYLLDYE…KPCFYSFLQA (301 aa)) enclose the GH10 domain. Catalysis depends on E104, which acts as the Proton donor. The active-site Nucleophile is E216.

This sequence belongs to the glycosyl hydrolase 10 (cellulase F) family.

It carries out the reaction Endohydrolysis of (1-&gt;4)-beta-D-xylosidic linkages in xylans.. It participates in glycan degradation; xylan degradation. Its function is as follows. Could be a xylanase. The protein is Putative endo-1,4-beta-xylanase of Caldicellulosiruptor saccharolyticus (Caldocellum saccharolyticum).